The chain runs to 282 residues: Probable endonuclease 4 (282 aa).

The Zn(2+) site is built by His-70, His-110, Glu-146, Asp-180, His-183, His-217, Asp-230, His-232, and Glu-262.

Belongs to the AP endonuclease 2 family. The cofactor is Zn(2+).

It carries out the reaction Endonucleolytic cleavage to 5'-phosphooligonucleotide end-products.. Endonuclease IV plays a role in DNA repair. It cleaves phosphodiester bonds at apurinic or apyrimidinic (AP) sites, generating a 3'-hydroxyl group and a 5'-terminal sugar phosphate. The sequence is that of Probable endonuclease 4 from Wolinella succinogenes (strain ATCC 29543 / DSM 1740 / CCUG 13145 / JCM 31913 / LMG 7466 / NCTC 11488 / FDC 602W) (Vibrio succinogenes).